We begin with the raw amino-acid sequence, 344 residues long: NDP-polyphosphate phosphotransferase 2 (344 aa).

Residues 1-60 are disordered; it reads METAKPIAPQKDSKANGVDATDPVVKVASPQDPAGDAKVEDATAPVAEVEPRTPRNRRLP.

This sequence belongs to the polyphosphate kinase 2 (PPK2) family. Class I subfamily. It depends on Mg(2+) as a cofactor.

It catalyses the reaction [phosphate](n) + ATP = [phosphate](n+1) + ADP. The catalysed reaction is [phosphate](n) + CTP = [phosphate](n+1) + CDP. It carries out the reaction [phosphate](n) + GTP = [phosphate](n+1) + GDP. The enzyme catalyses [phosphate](n) + UTP = [phosphate](n+1) + UDP. Its function is as follows. Uses inorganic polyphosphate (polyP) as a donor to convert NDP to NTP. PolyP hydrolysis is slightly faster with ADP, but it can also use GDP, CDP and UDP. This chain is NDP-polyphosphate phosphotransferase 2, found in Ruegeria pomeroyi (strain ATCC 700808 / DSM 15171 / DSS-3) (Silicibacter pomeroyi).